Reading from the N-terminus, the 391-residue chain is ATP-sensitive inward rectifier potassium channel 1 (391 aa).

At 1–77 the chain is on the cytoplasmic side; that stretch reads MNASSRNVFD…IWTTVLDLKW (77 aa). Ser-44 carries the phosphoserine; by SGK1 modification. Residues 78–102 form a helical membrane-spanning segment; the sequence is RYKMTIFITAFLGSWFFFGLLWYAV. At 103–127 the chain is on the extracellular side; the sequence is AYIHKDLPEFHPSANHTPCVENING. Residue Asn-117 is glycosylated (N-linked (GlcNAc...) asparagine). The segment at residues 128-139 is an intramembrane region (helical; Pore-forming); it reads LTSAFLFSLETQ. Positions 140–146 form an intramembrane region, pore-forming; the sequence is VTIGYGF. The short motif at 141 to 146 is the Selectivity filter element; sequence TIGYGF. Residues 147-155 are Extracellular-facing; that stretch reads RCVTEQCAT. A helical transmembrane segment spans residues 156 to 177; that stretch reads AIFLLIFQSILGVIINSFMCGA. The Cytoplasmic portion of the chain corresponds to 178–391; sequence ILAKISRPKK…EVNETDDTKM (214 aa). The segment at 180-207 is polyphosphoinositide (PIP2)-binding; sequence AKISRPKKRAKTITFSKNAVISKRGGKL. 223–230 serves as a coordination point for ATP; the sequence is GSHIYGKL.

Belongs to the inward rectifier-type potassium channel (TC 1.A.2.1) family. KCNJ1 subfamily. Interacts with SGK1 and SLC9A3R2/NHERF2. Post-translationally, phosphorylation at Ser-44 by SGK1 is necessary for its expression at the cell membrane. In terms of tissue distribution, in the kidney and pancreatic islets. Lower levels in skeletal muscle, pancreas, spleen, brain, heart and liver.

Its subcellular location is the cell membrane. It catalyses the reaction K(+)(in) = K(+)(out). With respect to regulation, inhibited by WNK3. Activated by phosphatidylinositol 4,5 biphosphate (PtdIns(4,5)P2). In terms of biological role, inward rectifier potassium channels are characterized by a greater tendency to allow potassium to flow into the cell rather than out of it. Their voltage dependence is regulated by the concentration of extracellular potassium; as external potassium is raised, the voltage range of the channel opening shifts to more positive voltages. The inward rectification is mainly due to the blockage of outward current by internal magnesium. This channel is activated by internal ATP and can be blocked by external barium. In the kidney, probably plays a major role in potassium homeostasis. This is ATP-sensitive inward rectifier potassium channel 1 (KCNJ1) from Homo sapiens (Human).